Here is a 317-residue protein sequence, read N- to C-terminus: Putative HTH-type transcriptional regulatory protein Mlab_0160 (317 aa).

One can recognise an HTH cro/C1-type domain in the interval 132-189; it reads LRTLREEQAMSLGDLAHALGVSRRTISKYEGGMGTTLEMAMRLEEFFNDDIVMPIDLL. The segment at residues 143–162 is a DNA-binding region (H-T-H motif); that stretch reads LGDLAHALGVSRRTISKYEG. A disordered region spans residues 199-219; sequence VPASLASGHNPESDAQPKRPE. The span at 209–219 shows a compositional bias: basic and acidic residues; it reads PESDAQPKRPE.

The sequence is that of Putative HTH-type transcriptional regulatory protein Mlab_0160 from Methanocorpusculum labreanum (strain ATCC 43576 / DSM 4855 / Z).